The chain runs to 409 residues: Elongation factor Tu, chloroplastic (409 aa).

The tr-type G domain occupies 10-214 (KPHVNIGTIG…AVDAYIPTPE (205 aa)). A G1 region spans residues 19 to 26 (GHVDHGKT). A GTP-binding site is contributed by 19–26 (GHVDHGKT). Residue threonine 26 participates in Mg(2+) binding. The G2 stretch occupies residues 60–64 (GITIN). The segment at 81–84 (DCPG) is G3. Residues 81–85 (DCPGH) and 136–139 (NKQD) each bind GTP. The interval 136 to 139 (NKQD) is G4. The interval 174–176 (SAL) is G5.

It belongs to the TRAFAC class translation factor GTPase superfamily. Classic translation factor GTPase family. EF-Tu/EF-1A subfamily.

It is found in the plastid. The protein resides in the chloroplast. It catalyses the reaction GTP + H2O = GDP + phosphate + H(+). Functionally, GTP hydrolase that promotes the GTP-dependent binding of aminoacyl-tRNA to the A-site of ribosomes during protein biosynthesis. The chain is Elongation factor Tu, chloroplastic (tufA) from Thalassiosira pseudonana (Marine diatom).